We begin with the raw amino-acid sequence, 210 residues long: Endo-1,4-beta-xylanase A (210 aa).

The N-terminal stretch at 1-19 (MKLKKKMLTLLLTASMSFG) is a signal peptide. In terms of domain architecture, GH11 spans 20-210 (LFGATSSAAT…SSGRSNVTVW (191 aa)). The Nucleophile role is filled by Glu-104. Glu-197 functions as the Proton donor in the catalytic mechanism.

The protein belongs to the glycosyl hydrolase 11 (cellulase G) family.

It carries out the reaction Endohydrolysis of (1-&gt;4)-beta-D-xylosidic linkages in xylans.. Its pathway is glycan degradation; xylan degradation. This chain is Endo-1,4-beta-xylanase A (xynA), found in Geobacillus stearothermophilus (Bacillus stearothermophilus).